Consider the following 336-residue polypeptide: Fructose-1,6-bisphosphatase class 1 (336 aa).

Mg(2+) contacts are provided by Glu90, Asp112, Leu114, and Asp115. Substrate-binding positions include 115 to 118 (DGSS), Asn211, and Lys277. Mg(2+) is bound at residue Glu283.

This sequence belongs to the FBPase class 1 family. In terms of assembly, homotetramer. Mg(2+) serves as cofactor.

It is found in the cytoplasm. It catalyses the reaction beta-D-fructose 1,6-bisphosphate + H2O = beta-D-fructose 6-phosphate + phosphate. The protein operates within carbohydrate biosynthesis; gluconeogenesis. The polypeptide is Fructose-1,6-bisphosphatase class 1 (Pseudomonas savastanoi pv. phaseolicola (strain 1448A / Race 6) (Pseudomonas syringae pv. phaseolicola (strain 1448A / Race 6))).